A 599-amino-acid polypeptide reads, in one-letter code: Elongation factor 4 (599 aa).

Positions 5–187 (SHIRNFSIIA…RLVQSIPAPE (183 aa)) constitute a tr-type G domain. GTP-binding positions include 17–22 (DHGKST) and 134–137 (NKMD).

Belongs to the TRAFAC class translation factor GTPase superfamily. Classic translation factor GTPase family. LepA subfamily.

The protein resides in the cell inner membrane. The catalysed reaction is GTP + H2O = GDP + phosphate + H(+). Its function is as follows. Required for accurate and efficient protein synthesis under certain stress conditions. May act as a fidelity factor of the translation reaction, by catalyzing a one-codon backward translocation of tRNAs on improperly translocated ribosomes. Back-translocation proceeds from a post-translocation (POST) complex to a pre-translocation (PRE) complex, thus giving elongation factor G a second chance to translocate the tRNAs correctly. Binds to ribosomes in a GTP-dependent manner. This Pseudomonas entomophila (strain L48) protein is Elongation factor 4.